A 444-amino-acid polypeptide reads, in one-letter code: Enolase 1 (444 aa).

Residues His165 and Glu174 each coordinate substrate. Residue Glu217 is the Proton donor of the active site. Glu303 and Asp330 together coordinate substrate. The active-site Proton acceptor is the Lys355. Substrate is bound by residues 382–385 and Lys406; that span reads SHRS.

It belongs to the enolase family. Homodimer. Requires Mg(2+) as cofactor.

The protein resides in the cytoplasm. The catalysed reaction is (2R)-2-phosphoglycerate = phosphoenolpyruvate + H2O. It participates in carbohydrate degradation; glycolysis; pyruvate from D-glyceraldehyde 3-phosphate: step 4/5. In Toxoplasma gondii, this protein is Enolase 1 (ENO1).